Reading from the N-terminus, the 531-residue chain is Importin subunit alpha-2 (531 aa).

Over residues 1–10 (MTLTETSLSH) the composition is skewed to polar residues. Residues 1–88 (MTLTETSLSH…ISHQQSSTRL (88 aa)) are disordered. One can recognise an IBB domain in the interval 5–67 (ETSLSHNAEE…RNIVDVDEGG (63 aa)). 2 stretches are compositionally biased toward basic and acidic residues: residues 11–20 (NAEEGKDEGG) and 29–50 (TKHEELRRRRTECSVEIRKQKG). Residues 62–75 (DVDEGGNSESELEE) show a composition bias toward acidic residues. 7 ARM repeats span residues 122–161 (NPPIDEVIHCGLLQALVQALSVENERVQYEAAWALTNIVS), 164–203 (TEQTIAAVEAGVTIPLIHLSVHQSAQISEQALWAVANIAG), 250–290 (KNPH…YLTD), 293–331 (DEQIELARESGVLPHVVAFFKEAENLVAPALRTLGNVAT), 334–374 (DSLT…NIIA), 377–416 (QKQIQAVLDANLLPVLINVLKSGDHKCQFEASWALSNLAQ), and 420–459 (NRQVVAMLEDNVVPALCQALLQTNTDMLNNTLETLYTLML). The disordered stretch occupies residues 511–531 (DDAGEKESHENADPQDNKWSF). The span at 515–531 (EKESHENADPQDNKWSF) shows a compositional bias: basic and acidic residues.

This sequence belongs to the importin alpha family. As to quaternary structure, forms a complex with an importin beta subunit. Interacts with akir-1. As to expression, germline tissues. Expressed exclusively in germ line cells from the early embryonic through adult stages.

Its subcellular location is the cytoplasm. The protein resides in the nucleus. It localises to the nucleus envelope. Its function is as follows. Nuclear transport receptor that mediates nuclear import of proteins, and which is involved in sister chromatid cohesion. Binds specifically and directly to substrates containing either a simple or bipartite nuclear localization signals (NLS) motif. Promotes docking of import substrates to the nuclear envelope. Together with akir-1 adapter, required for the import and load of cohesin complex proteins in meiotic nuclei. This Caenorhabditis elegans protein is Importin subunit alpha-2.